A 346-amino-acid polypeptide reads, in one-letter code: Probable long-chain-alcohol O-fatty-acyltransferase 6 (346 aa).

A run of 8 helical transmembrane segments spans residues 7-27 (LFIQVWVSAIISVTYCYYLTP), 36-56 (LLSVLPVCVLFLIIPIFFSTV), 59-79 (SFTIAFFLSGLAVPKLILFAL), 116-136 (FPKWVFALKVFIFGALLLQAY), 146-166 (FLLGLYALHIYLELEISLTLI), 228-248 (FFAIFATFLVSGVAHEILYFY), 255-275 (TWEVTWFFVLHGFCMAAEVAL), and 289-309 (PAVSRLLTVGFVFVTGVWLFS).

Belongs to the wax synthase family.

It localises to the membrane. It catalyses the reaction a long chain fatty alcohol + a fatty acyl-CoA = a wax ester + CoA. Its function is as follows. Catalyzes the final step in the synthesis of long-chain linear esters (waxes). The polypeptide is Probable long-chain-alcohol O-fatty-acyltransferase 6 (AT6) (Arabidopsis thaliana (Mouse-ear cress)).